The following is a 993-amino-acid chain: NACHT, LRR and PYD domains-containing protein 14 (993 aa).

An NACHT domain is found at Gln-81–Glu-403. An ATP-binding site is contributed by Gly-87 to Thr-94. 9 LRR repeats span residues Asp-636–Lys-657, Lys-660–Ser-680, Ser-688–Cys-708, Ser-717–Ser-738, Arg-745–Ser-765, Thr-774–Thr-795, Ser-802–Cys-822, Asn-831–Ser-852, and Asn-859–Cys-879.

The protein belongs to the NLRP family. Detected in adult ovary and testis. Detected in oocytes and in germ cell elements in seminiferous tubules in adult testis (at protein level).

The protein localises to the cytoplasm. In terms of biological role, may be involved in inflammation and spermatogenesis. This is NACHT, LRR and PYD domains-containing protein 14 (Nlrp14) from Mus musculus (Mouse).